Consider the following 179-residue polypeptide: ATP synthase subunit delta (179 aa).

It belongs to the ATPase delta chain family. F-type ATPases have 2 components, F(1) - the catalytic core - and F(0) - the membrane proton channel. F(1) has five subunits: alpha(3), beta(3), gamma(1), delta(1), epsilon(1). F(0) has three main subunits: a(1), b(2) and c(10-14). The alpha and beta chains form an alternating ring which encloses part of the gamma chain. F(1) is attached to F(0) by a central stalk formed by the gamma and epsilon chains, while a peripheral stalk is formed by the delta and b chains.

It localises to the cell membrane. Its function is as follows. F(1)F(0) ATP synthase produces ATP from ADP in the presence of a proton or sodium gradient. F-type ATPases consist of two structural domains, F(1) containing the extramembraneous catalytic core and F(0) containing the membrane proton channel, linked together by a central stalk and a peripheral stalk. During catalysis, ATP synthesis in the catalytic domain of F(1) is coupled via a rotary mechanism of the central stalk subunits to proton translocation. Functionally, this protein is part of the stalk that links CF(0) to CF(1). It either transmits conformational changes from CF(0) to CF(1) or is implicated in proton conduction. The chain is ATP synthase subunit delta from Clostridium botulinum (strain 657 / Type Ba4).